A 265-amino-acid polypeptide reads, in one-letter code: MNFLVSILLGIIQGISEWLPISSKTQELIASHYLLGLDVSIAYTFGLFMEMGSIGSALIYFRQDVKRVFHDKFLLKFLVVVTALTGIVGVPLYVISDKLLQNAYNPSIPMIFLGIALIADGIYIRYSRSRTREFKNLSTKEMILIGIAQGIAALPGVSRSGMTVSTMLVLGINPEDAFHYSYLAYIPAAIGSVGTTLLFTRHHISYVVSLIGIDGIALAVISALLTGLVVIGFLLKIAKTKKVYLIDFMLGGIAVLVSMLGLIIS.

Transmembrane regions (helical) follow at residues 41–61, 75–95, 104–124, 137–157, 180–200, 215–235, and 244–264; these read IAYT…LIYF, LKFL…LYVI, YNPS…GIYI, LSTK…LPGV, YSYL…LLFT, GIAL…GFLL, and YLID…GLII.

The protein belongs to the UppP family.

Its subcellular location is the cell membrane. It carries out the reaction di-trans,octa-cis-undecaprenyl diphosphate + H2O = di-trans,octa-cis-undecaprenyl phosphate + phosphate + H(+). Functionally, catalyzes the dephosphorylation of undecaprenyl diphosphate (UPP). The sequence is that of Undecaprenyl-diphosphatase from Saccharolobus islandicus (strain Y.N.15.51 / Yellowstone #2) (Sulfolobus islandicus).